The chain runs to 787 residues: Protocadherin beta-15 (787 aa).

Positions 1-26 (MEPAGERFPEQRQVLILLLLLEVTLA) are cleaved as a signal peptide. At 27–690 (GWEPRRYSVM…AQADSLTVYL (664 aa)) the chain is on the extracellular side. Cadherin domains are found at residues 35–133 (VMEE…SPEF), 138–242 (MTLK…APEF), 247–347 (YEVQ…FPEL), 352–451 (LTSP…APAF), and 456–561 (YTLF…SPFV). The N-linked (GlcNAc...) asparagine glycan is linked to Asn-418. N-linked (GlcNAc...) asparagine glycosylation occurs at Asn-567. In terms of domain architecture, Cadherin 6 spans 568-671 (GSAPCTELVP…LVDGFSQPYL (104 aa)). A helical transmembrane segment spans residues 691–711 (VVALASVSSLFLFSVFLFVAV). Residues 712 to 787 (RLCRRSRAAS…DSRRKSEFLE (76 aa)) are Cytoplasmic-facing.

The protein resides in the cell membrane. Potential calcium-dependent cell-adhesion protein. May be involved in the establishment and maintenance of specific neuronal connections in the brain. This Homo sapiens (Human) protein is Protocadherin beta-15 (PCDHB15).